Reading from the N-terminus, the 96-residue chain is Co-chaperonin GroES (96 aa).

The protein belongs to the GroES chaperonin family. In terms of assembly, heptamer of 7 subunits arranged in a ring. Interacts with the chaperonin GroEL.

The protein localises to the cytoplasm. Its function is as follows. Together with the chaperonin GroEL, plays an essential role in assisting protein folding. The GroEL-GroES system forms a nano-cage that allows encapsulation of the non-native substrate proteins and provides a physical environment optimized to promote and accelerate protein folding. GroES binds to the apical surface of the GroEL ring, thereby capping the opening of the GroEL channel. The polypeptide is Co-chaperonin GroES (Buchnera aphidicola subsp. Schizaphis graminum (strain Sg)).